The sequence spans 413 residues: Serine hydroxymethyltransferase (413 aa).

Residues L117 and 121–123 (GHL) contribute to the (6S)-5,6,7,8-tetrahydrofolate site. At K226 the chain carries N6-(pyridoxal phosphate)lysine. Residues E239 and 349–351 (SPF) contribute to the (6S)-5,6,7,8-tetrahydrofolate site.

It belongs to the SHMT family. Homodimer. It depends on pyridoxal 5'-phosphate as a cofactor.

Its subcellular location is the cytoplasm. It carries out the reaction (6R)-5,10-methylene-5,6,7,8-tetrahydrofolate + glycine + H2O = (6S)-5,6,7,8-tetrahydrofolate + L-serine. It participates in one-carbon metabolism; tetrahydrofolate interconversion. Its pathway is amino-acid biosynthesis; glycine biosynthesis; glycine from L-serine: step 1/1. Functionally, catalyzes the reversible interconversion of serine and glycine with tetrahydrofolate (THF) serving as the one-carbon carrier. This reaction serves as the major source of one-carbon groups required for the biosynthesis of purines, thymidylate, methionine, and other important biomolecules. Also exhibits THF-independent aldolase activity toward beta-hydroxyamino acids, producing glycine and aldehydes, via a retro-aldol mechanism. The protein is Serine hydroxymethyltransferase of Bacillus mycoides (strain KBAB4) (Bacillus weihenstephanensis).